The chain runs to 149 residues: Protein E6 (149 aa).

2 zinc fingers span residues 30–66 and 103–139; these read CVYC…CMKC and CITC…CMSC. The PDZ-binding domain motif lies at 147–149; sequence TEV.

The protein belongs to the papillomaviridae E6 protein family. As to quaternary structure, forms homodimers. Interacts with ubiquitin-protein ligase UBE3A/E6-AP and thus forms a complex with human TP53. Interacts with human NFX1 and MAGI3. Interacts with human IRF3; this interaction inhibits the establishment of antiviral state. Interacts with human TYK2; this interaction inhibits JAK-STAT activation by interferon alpha. Interacts with host DLG1; this interaction leads to the proteasomal degradation of DLG1.

It is found in the host cytoplasm. It localises to the host nucleus. Functionally, this protein may be involved in the oncogenic potential of this virus (associated with cancer of the uterine cervix). In terms of biological role, plays a major role in the induction and maintenance of cellular transformation. Acts mainly as an oncoprotein by stimulating the destruction of many host cell key regulatory proteins. E6 associates with host UBE3A/E6-AP ubiquitin-protein ligase, and inactivates tumor suppressors TP53 and TP73 by targeting them to the 26S proteasome for degradation. In turn, DNA damage and chromosomal instabilities increase and lead to cell proliferation and cancer development. The complex E6/E6AP targets several other substrates to degradation via the proteasome including host DLG1 or NFX1, a repressor of human telomerase reverse transcriptase (hTERT). The resulting increased expression of hTERT prevents the shortening of telomere length leading to cell immortalization. Other cellular targets including BAK1, Fas-associated death domain-containing protein (FADD) and procaspase 8, are degraded by E6/E6AP causing inhibition of apoptosis. E6 also inhibits immune response by interacting with host IRF3 and TYK2. These interactions prevent IRF3 transcriptional activities and inhibit TYK2-mediated JAK-STAT activation by interferon alpha resulting in inhibition of the interferon signaling pathway. The chain is Protein E6 from Human papillomavirus 35.